Reading from the N-terminus, the 161-residue chain is Nucleotide-binding protein Bcep18194_A5887 (161 aa).

It belongs to the YajQ family.

Its function is as follows. Nucleotide-binding protein. The sequence is that of Nucleotide-binding protein Bcep18194_A5887 from Burkholderia lata (strain ATCC 17760 / DSM 23089 / LMG 22485 / NCIMB 9086 / R18194 / 383).